A 67-amino-acid polypeptide reads, in one-letter code: DNA-directed RNA polymerase subunit omega (67 aa).

Belongs to the RNA polymerase subunit omega family. The RNAP catalytic core consists of 2 alpha, 1 beta, 1 beta' and 1 omega subunit. When a sigma factor is associated with the core the holoenzyme is formed, which can initiate transcription.

The catalysed reaction is RNA(n) + a ribonucleoside 5'-triphosphate = RNA(n+1) + diphosphate. In terms of biological role, promotes RNA polymerase assembly. Latches the N- and C-terminal regions of the beta' subunit thereby facilitating its interaction with the beta and alpha subunits. This Exiguobacterium sibiricum (strain DSM 17290 / CCUG 55495 / CIP 109462 / JCM 13490 / 255-15) protein is DNA-directed RNA polymerase subunit omega.